A 389-amino-acid chain; its full sequence is Lipid-A-disaccharide synthase (389 aa).

It belongs to the LpxB family.

It catalyses the reaction a lipid X + a UDP-2-N,3-O-bis[(3R)-3-hydroxyacyl]-alpha-D-glucosamine = a lipid A disaccharide + UDP + H(+). It functions in the pathway bacterial outer membrane biogenesis; LPS lipid A biosynthesis. In terms of biological role, condensation of UDP-2,3-diacylglucosamine and 2,3-diacylglucosamine-1-phosphate to form lipid A disaccharide, a precursor of lipid A, a phosphorylated glycolipid that anchors the lipopolysaccharide to the outer membrane of the cell. The sequence is that of Lipid-A-disaccharide synthase from Histophilus somni (strain 2336) (Haemophilus somnus).